The chain runs to 515 residues: NADH-quinone oxidoreductase subunit N (515 aa).

The next 14 membrane-spanning stretches (helical) occupy residues 14–34, 40–60, 80–100, 138–158, 160–180, 195–215, 239–259, 271–291, 307–327, 333–353, 361–381, 404–424, 438–458, and 485–505; these read ITPILVILGAACLGVLVEAFL, WSAQVGLSLLALVAAGVALAL, APTLFLWGTLLALGLGAILLI, TEVFPLALFALGGMMVFCAAN, LLTMFIALEVLSLPLYLMCGL, YFLLGAFASAFFLYGLALLYG, LFAGLGLLVVGLLFKASVGPF, PTAVTGFMAACTKVAAFGGIL, GVLYAVAIVSMAIGVVLGLTQ, MIAYSSVAHAGFLLVGSIALT, MFYLLAYGFTTIAIFGVISLV, VAWVFTFLLLALAGIPMTSGF, GMAPLVVVALVASAVAAFFYL, and AAITLGVVVTLLLGVLPSLAL.

This sequence belongs to the complex I subunit 2 family. As to quaternary structure, NDH-1 is composed of 14 different subunits. Subunits NuoA, H, J, K, L, M, N constitute the membrane sector of the complex.

The protein resides in the cell membrane. The enzyme catalyses a quinone + NADH + 5 H(+)(in) = a quinol + NAD(+) + 4 H(+)(out). In terms of biological role, NDH-1 shuttles electrons from NADH, via FMN and iron-sulfur (Fe-S) centers, to quinones in the respiratory chain. The immediate electron acceptor for the enzyme in this species is believed to be a menaquinone. Couples the redox reaction to proton translocation (for every two electrons transferred, four hydrogen ions are translocated across the cytoplasmic membrane), and thus conserves the redox energy in a proton gradient. This chain is NADH-quinone oxidoreductase subunit N, found in Saccharopolyspora erythraea (strain ATCC 11635 / DSM 40517 / JCM 4748 / NBRC 13426 / NCIMB 8594 / NRRL 2338).